Consider the following 843-residue polypeptide: Probable inorganic carbon transporter subunit DabA 2 (843 aa).

Positions 352, 354, 536, and 551 each coordinate Zn(2+).

The protein belongs to the inorganic carbon transporter (TC 9.A.2) DabA family. Forms a complex with DabB. The cofactor is Zn(2+).

The protein resides in the cell inner membrane. Functionally, part of an energy-coupled inorganic carbon pump. This is Probable inorganic carbon transporter subunit DabA 2 from Bradyrhizobium sp. (strain BTAi1 / ATCC BAA-1182).